We begin with the raw amino-acid sequence, 249 residues long: Serine 3-dehydrogenase (249 aa).

6–30 (LITGATSGFGQATARRFVKEGWKVI) contacts NADP(+). Serine 135 contributes to the substrate binding site. Residue tyrosine 148 is the Proton acceptor of the active site.

The protein belongs to the short-chain dehydrogenases/reductases (SDR) family. In terms of assembly, homotetramer.

The catalysed reaction is L-serine + NADP(+) = aminoacetaldehyde + CO2 + NADPH. Catalyzes the oxidation of the hydroxyl group of serine to form 2-aminomalonate semialdehyde which is spontaneously converted into 2-aminoacetaldehyde and CO(2). Also acts on D-serine, L-glycerate, D-glycerate and 2-methyl-DL-serine. Does not act on O-methyl-DL-serine and L-threonine. The chain is Serine 3-dehydrogenase (sdh) from Agrobacterium fabrum (strain C58 / ATCC 33970) (Agrobacterium tumefaciens (strain C58)).